Reading from the N-terminus, the 588-residue chain is Probable basic-leucine zipper transcription factor M (588 aa).

The stretch at 127-157 forms a coiled coil; sequence QVEQQQEQEQEQEQQQKQQQQQYIEKQIQEI. The span at 221-240 shows a compositional bias: low complexity; sequence QQNHIDNQSLNNSNTKTSKN. The segment at 221-250 is disordered; sequence QQNHIDNQSLNNSNTKTSKNQQKDNNLPKK. Positions 263 to 326 constitute a bZIP domain; it reads NNNNIEKKRD…GSNLMRPEPE (64 aa). The interval 269 to 289 is basic motif; sequence KKRDQTESSKNFREKKKEYVK. The interval 291-312 is leucine-zipper; that stretch reads IESKILALTLENDKLKKENDSL.

This sequence belongs to the bZIP family.

It is found in the nucleus. Functionally, probable transcriptional regulator. The sequence is that of Probable basic-leucine zipper transcription factor M (bzpM) from Dictyostelium discoideum (Social amoeba).